Reading from the N-terminus, the 414-residue chain is MNDIFIGLQLREHFMAEENKKGGFWASLFGRNKKQDEPKIEPIIEEEKIKDIEPSIEKFEANDLVEEEKIQEISTALEPIEEIIEAKNLEDEFQPVVEIETREKPSEGGFFSRLVKGLLKTKQNIGAGFRGFFLGKKIDDELFEELEEQLLIADIGVPTTSKIIKNLTEHASRKELQDAELLYQQLKVEMADILEPVAQPLEIDSTKKPYVILMVGVNGVGKTTTIGKLARKFQAEGKSVMLAAGDTFRAAAVEQLQVWGERNHIPVVAQSTGSDSASVIFDAMQSAAARNIDILIADTAGRLQNKNNLMDELKKIVRVMKKYDETAPHEIMLTLDAGTGQNAISQAKLFNEAVGLTGISLTKLDGTAKGGVIFAIADQFKLPIRYIGVGEKIEDLREFNAKEFIEALFVHEEE.

GTP-binding positions include 216-223, 298-302, and 362-365; these read GVNGVGKT, DTAGR, and TKLD.

This sequence belongs to the GTP-binding SRP family. FtsY subfamily. Part of the signal recognition particle protein translocation system, which is composed of SRP and FtsY. SRP is a ribonucleoprotein composed of Ffh and a 4.5S RNA molecule.

Its subcellular location is the cell inner membrane. The protein localises to the cytoplasm. The catalysed reaction is GTP + H2O = GDP + phosphate + H(+). Involved in targeting and insertion of nascent membrane proteins into the cytoplasmic membrane. Acts as a receptor for the complex formed by the signal recognition particle (SRP) and the ribosome-nascent chain (RNC). Interaction with SRP-RNC leads to the transfer of the RNC complex to the Sec translocase for insertion into the membrane, the hydrolysis of GTP by both Ffh and FtsY, and the dissociation of the SRP-FtsY complex into the individual components. In Haemophilus influenzae (strain ATCC 51907 / DSM 11121 / KW20 / Rd), this protein is Signal recognition particle receptor FtsY.